The sequence spans 254 residues: 3-deoxy-manno-octulosonate cytidylyltransferase (254 aa).

The protein belongs to the KdsB family.

The protein localises to the cytoplasm. The enzyme catalyses 3-deoxy-alpha-D-manno-oct-2-ulosonate + CTP = CMP-3-deoxy-beta-D-manno-octulosonate + diphosphate. It functions in the pathway nucleotide-sugar biosynthesis; CMP-3-deoxy-D-manno-octulosonate biosynthesis; CMP-3-deoxy-D-manno-octulosonate from 3-deoxy-D-manno-octulosonate and CTP: step 1/1. Its pathway is bacterial outer membrane biogenesis; lipopolysaccharide biosynthesis. In terms of biological role, activates KDO (a required 8-carbon sugar) for incorporation into bacterial lipopolysaccharide in Gram-negative bacteria. This chain is 3-deoxy-manno-octulosonate cytidylyltransferase, found in Pseudomonas paraeruginosa (strain DSM 24068 / PA7) (Pseudomonas aeruginosa (strain PA7)).